The primary structure comprises 553 residues: Putative transport protein YidE (553 aa).

5 helical membrane passes run 4–24 (IALT…IGNV), 28–48 (GIGL…HFVS), 65–85 (FGLI…FFAS), 95–115 (LFAV…HKLF), and 158–178 (MSYA…MWML). 2 consecutive RCK C-terminal domains span residues 191-276 (QQHE…VIGQ) and 279-361 (DTSL…VLGN). 6 helical membrane passes run 371 to 391 (MLPV…PVFV), 393 to 413 (GFPA…ALIL), 439 to 459 (IVLF…NTLV), 464 to 484 (LSWI…VGIL), 493 to 513 (YLTM…LAFA), and 533 to 553 (LVMF…WSIG).

The protein belongs to the AAE transporter (TC 2.A.81) family. YidE subfamily.

It is found in the cell membrane. The protein is Putative transport protein YidE of Shigella flexneri serotype 5b (strain 8401).